We begin with the raw amino-acid sequence, 108 residues long: Small ribosomal subunit protein uS17 (108 aa).

The interval 1-26 (MREKMAEATETQASETSTRGRPKTRV) is disordered. Low complexity predominate over residues 8–17 (ATETQASETS).

This sequence belongs to the universal ribosomal protein uS17 family. As to quaternary structure, part of the 30S ribosomal subunit.

In terms of biological role, one of the primary rRNA binding proteins, it binds specifically to the 5'-end of 16S ribosomal RNA. In Myxococcus xanthus (strain DK1622), this protein is Small ribosomal subunit protein uS17.